The chain runs to 243 residues: Terpene cyclase paxB (243 aa).

The next 7 membrane-spanning stretches (helical) occupy residues 23 to 43 (FVVG…YISF), 49 to 69 (GMSI…CLVF), 78 to 98 (GVFW…ITFS), 112 to 132 (ISLI…ALAL), 134 to 154 (IGPA…LSVG), 172 to 194 (LWAS…WMYW), and 205 to 225 (LVLW…ICFW).

It belongs to the paxB family.

It localises to the membrane. The protein operates within secondary metabolite biosynthesis. Its function is as follows. Terpene cyclase; part of the ATM2 gene cluster that mediates the biosynthesis of paxilline, a mycotoxin that acts as an inhibitor of mammalian maxi-K channels. PaxG, the geranylgeranyl diphosphate (GGPP) synthase is proposed to catalyze the first step in paxilline biosynthesis. Condensation of indole-3-glycerol phosphate with GGPP by paxC then forms 3-geranylgeranylindole (3-GGI), followed by epoxidation and cyclization of this intermediate (by paxM and paxB) to form paspaline. Paspaline is subsequently converted to 13-desoxypaxilline by paxP, the latter being then converted to paxilline by paxQ. Finally paxilline can be mono- and di-prenylated by paxD. This Penicillium paxilli protein is Terpene cyclase paxB.